Consider the following 303-residue polypeptide: MSFTTTVKEELIHLSASDQTELSAIIKLAGSLGLANQSLNLSITTENAKIARYIYALIEDTYHIIPEIKYHQKTNLKKNRVYTVYLDKQVDKLLADLKLADSFFGIETGIEQQVMSDDDAGRAYLKGAFLAAGTVRDPESGKYQLEIYSVYLDHAQDLAQLMHKFMLDAKVIERKNGAVTYLQKAEDIMDFLIIIGAMSCKEEFEAVKLLREARNDINRANNAETANIAKTITASMRTINNIIKIMDTIGLDSLPVELQQIAQMRVANPDYSLQQIADSLDFAITKSGVNHRLRKINKLAEDL.

Residues 272–303 constitute a DNA-binding region (H-T-H motif); it reads SLQQIADSLDFAITKSGVNHRLRKINKLAEDL.

This sequence belongs to the WhiA family.

Involved in cell division and chromosome segregation. This chain is Probable cell division protein WhiA, found in Streptococcus equi subsp. zooepidemicus (strain MGCS10565).